The following is a 291-amino-acid chain: Secreted effector protein PipB (291 aa).

2 consecutive Pentapeptide repeat domains span residues 154-193 (LNLR…NLVG) and 199-238 (ANLH…ILFG).

It is found in the secreted. It localises to the host membrane. In terms of biological role, effector proteins function to alter host cell physiology and promote bacterial survival in host tissues. Does not appear to be required for the formation or the maintenance of either Salmonella-containing vacuole (SCV) or the Salmonella-induced filaments (Sifs). Not required for intracellular replication in phagocytic cells. This is Secreted effector protein PipB (pipB) from Salmonella typhimurium (strain LT2 / SGSC1412 / ATCC 700720).